The primary structure comprises 27 residues: Toxin TdII-4 (27 aa).

Positions 1-27 (KDGYLMEPNGCKLGCLTRPAKYCWXEE) constitute an LCN-type CS-alpha/beta domain.

This sequence belongs to the long (4 C-C) scorpion toxin superfamily. Sodium channel inhibitor family. Beta subfamily. As to expression, expressed by the venom gland.

It localises to the secreted. In terms of biological role, beta toxins bind voltage-independently at site-4 of sodium channels (Nav) and shift the voltage of activation toward more negative potentials thereby affecting sodium channel activation and promoting spontaneous and repetitive firing. This toxin is active against mammals and also affects neuromuscular preparations of frog. The sequence is that of Toxin TdII-4 from Tityus discrepans (Venezuelan scorpion).